The sequence spans 344 residues: MAAREGRAPLARRAAIYGVVGLAAIAGVAMWSGAGPHRGTGAAGDAPDAAAVGGVAAAAPQAAVPASAGLPPSLAGSSAPRLPLDAGGHLAKSRAVRDFFDYCLTARSDLSAAALDALVVREIAAQLDGTVAQVEALDVWHRYRAYLDALATLRDAGAVDKSDLGALQLALDQRASIAYRTLGDWSQPFFGAEQWRQRYDLARLKITQDRSLTDAQKAERLAALQQQMPADERAAQQRVDRQRAAIDQIAQLQKSGATPDAMRAQLTQTLGPEAAARVAQMQQDDASWQSRYADYAAQRAQIESAGLSPQDRDAQIAALRQRVFTKPGEAVRAASLDRGAGSAH.

Residues 14–34 form a helical membrane-spanning segment; the sequence is AAIYGVVGLAAIAGVAMWSGA.

This sequence belongs to the lipase chaperone family.

Its subcellular location is the cell inner membrane. May be involved in the folding of the extracellular lipase during its passage through the periplasm. In Burkholderia cenocepacia (strain HI2424), this protein is Lipase chaperone.